The sequence spans 425 residues: CinA-like protein (425 aa).

This sequence belongs to the CinA family.

The polypeptide is CinA-like protein (Trichodesmium erythraeum (strain IMS101)).